The chain runs to 417 residues: Laccase-like protein claX (417 aa).

Belongs to the multicopper oxidase family.

Its function is as follows. Laccase-like protein; part of the gene cluster that mediates the biosynthesis of clavilactone A, a meroterpenoid that features a unique benzo-fused ten-membered carbocyclic ring unit with an alpha,beta-epoxy-gamma-lactone moiety, forming an intriguing 10/5/3 tricyclic nested skeleton. ClaR, ClaS and ClaT are sufficient to produce clavilactone A and the function of claX, if any, has still to be identified. The biosynthesis begins with the prenyltransferase claS that transfers geranyl pyrophosphate (GPP) to hydroquinone to produces geranylhydroquinon. The cytochrome P450 monooxygenase claR then catalyzes the diradical coupling reaction between the intramolecular hydroquinone and allyl moieties to form the benzo-fused ten-membered carbocyclic ring unit of wigantol. Finally the cytochrome P450 monooxygenase claT exquisitely and stereoselectively assembles the alpha,beta-epoxy-gamma-lactone moiety, producing clavilactone A via arnebinol A. This chain is Laccase-like protein claX, found in Ampulloclitocybe clavipes (Club foot).